The sequence spans 72 residues: Cytochrome b-c1 complex subunit 8-2, mitochondrial (72 aa).

The Mitochondrial matrix segment spans residues 1–41 (MGKQPVKLKAVVYALSPFQQKIMTGLWKDLPEKIHHKVSEN). The helical transmembrane segment at 42 to 58 (WISTILLVAPVVGTYSY) threads the bilayer. The Mitochondrial intermembrane portion of the chain corresponds to 59 to 72 (AQYFKEQEKLEHRF).

This sequence belongs to the UQCRQ/QCR8 family. Component of the ubiquinol-cytochrome c oxidoreductase (cytochrome b-c1 complex, complex III, CIII), a multisubunit enzyme composed of 10 subunits. The complex is composed of 3 respiratory subunits cytochrome b (MT-CYB), cytochrome c1 (CYC1-1 or CYC1-2) and Rieske protein (UCR1-1 or UCR1-2), 2 core protein subunits MPPalpha1 (or MPPalpha2) and MPPB, and 5 low-molecular weight protein subunits QCR7-1 (or QCR7-2), UCRQ-1 (or UCRQ-2), QCR9, UCRY and probably QCR6-1 (or QCR6-2). The complex exists as an obligatory dimer and forms supercomplexes (SCs) in the inner mitochondrial membrane with NADH-ubiquinone oxidoreductase (complex I, CI), resulting in different assemblies (supercomplexes SCI(1)III(2) and SCI(2)III(4)).

The protein resides in the mitochondrion inner membrane. Functionally, component of the ubiquinol-cytochrome c oxidoreductase, a multisubunit transmembrane complex that is part of the mitochondrial electron transport chain which drives oxidative phosphorylation. The respiratory chain contains 3 multisubunit complexes succinate dehydrogenase (complex II, CII), ubiquinol-cytochrome c oxidoreductase (cytochrome b-c1 complex, complex III, CIII) and cytochrome c oxidase (complex IV, CIV), that cooperate to transfer electrons derived from NADH and succinate to molecular oxygen, creating an electrochemical gradient over the inner membrane that drives transmembrane transport and the ATP synthase. The cytochrome b-c1 complex catalyzes electron transfer from ubiquinol to cytochrome c, linking this redox reaction to translocation of protons across the mitochondrial inner membrane, with protons being carried across the membrane as hydrogens on the quinol. In the process called Q cycle, 2 protons are consumed from the matrix, 4 protons are released into the intermembrane space and 2 electrons are passed to cytochrome c. The sequence is that of Cytochrome b-c1 complex subunit 8-2, mitochondrial (UCRQ-2) from Arabidopsis thaliana (Mouse-ear cress).